The chain runs to 222 residues: Sugar fermentation stimulation protein homolog (222 aa).

It belongs to the SfsA family.

This is Sugar fermentation stimulation protein homolog from Thermotoga sp. (strain RQ2).